The following is a 90-amino-acid chain: uncharacterized protein (90 aa).

This is an uncharacterized protein from Archaeoglobus fulgidus (strain ATCC 49558 / DSM 4304 / JCM 9628 / NBRC 100126 / VC-16).